The following is a 294-amino-acid chain: uncharacterized protein (294 aa).

Residues M1–A16 form the signal peptide. N-linked (GlcNAc...) asparagine; by host glycosylation is found at N25 and N162.

This is an uncharacterized protein from Acheta domesticus (House cricket).